The following is a 534-amino-acid chain: Signal recognition particle subunit SRP54 (534 aa).

Residues 1 to 296 (MVLQDLGRRI…EPKAFIQKLL (296 aa)) are G-domain. GTP-binding positions include 109 to 116 (GLQGAGKT), 191 to 195 (DTSGR), and 249 to 252 (TKTD). Residues 297–534 (GMGDMAGLVE…GGGGGRGRGR (238 aa)) form an M-domain region.

This sequence belongs to the GTP-binding SRP family. SRP54 subfamily. Fungal signal recognition particle consists of a 7S RNA molecule (scR1) and at least six protein subunits: srp72, srp68, srpA/srp54, sec65, srp21 and srp14.

It is found in the cytoplasm. The protein localises to the endoplasmic reticulum. It catalyses the reaction GTP + H2O = GDP + phosphate + H(+). Its function is as follows. Signal-recognition-particle (SRP) assembly has a crucial role in targeting secretory proteins to the rough endoplasmic reticulum (ER) membrane. SRP is required for the cotranslational protein translocation for ER import and preferentially recognizes strongly hydrophobic signal sequences. It is involved in targeting the nascent chain-ribosome (RNC) complex to the ER and is proposed to participate in the arrest of nascent chain elongation during membrane targeting. srpA/srp54 binds to the signal sequence of presecretory protein when they emerge from the ribosomes. srpA/srp54 interacts with the scR1 RNA and mediates the association of the resulting SRP-RNC complex with the signal recognition particle receptor (SR) via its alpha subunit srp101. Both, srpA/srp54 and srp101, are locked in their GTP bound forms in the SRP-RNC-SR complex, which dissociates upon transferring the signal sequence to the protein-conducting channel (translocon). After signal sequence transfer, srpA/srp54 and srp101 act as reciprocal GTPase-activating proteins (GAPs), thereby resolving their association. The sequence is that of Signal recognition particle subunit SRP54 (srpA) from Aspergillus niger.